The sequence spans 490 residues: tRNA-guanine(15) transglycosylase (490 aa).

Asp90 (nucleophile) is an active-site residue. The substrate site is built by Asp125 and Ala193. Zn(2+) contacts are provided by Cys276, Cys278, and Cys281.

This sequence belongs to the archaeosine tRNA-ribosyltransferase family. It depends on Zn(2+) as a cofactor.

The enzyme catalyses guanosine(15) in tRNA + 7-cyano-7-deazaguanine = 7-cyano-7-carbaguanosine(15) in tRNA + guanine. It functions in the pathway tRNA modification; archaeosine-tRNA biosynthesis. Exchanges the guanine residue with 7-cyano-7-deazaguanine (preQ0) at position 15 in the dihydrouridine loop (D-loop) of archaeal tRNAs. The polypeptide is tRNA-guanine(15) transglycosylase (Methanosarcina acetivorans (strain ATCC 35395 / DSM 2834 / JCM 12185 / C2A)).